A 498-amino-acid polypeptide reads, in one-letter code: ATP synthase subunit alpha 1 (498 aa).

Position 164–171 (164–171 (GNRQSGKT)) interacts with ATP.

It belongs to the ATPase alpha/beta chains family. F-type ATPases have 2 components, CF(1) - the catalytic core - and CF(0) - the membrane proton channel. CF(1) has five subunits: alpha(3), beta(3), gamma(1), delta(1), epsilon(1). CF(0) has three main subunits: a(1), b(2) and c(9-12). The alpha and beta chains form an alternating ring which encloses part of the gamma chain. CF(1) is attached to CF(0) by a central stalk formed by the gamma and epsilon chains, while a peripheral stalk is formed by the delta and b chains.

The protein localises to the cell membrane. It carries out the reaction ATP + H2O + 4 H(+)(in) = ADP + phosphate + 5 H(+)(out). Its function is as follows. Produces ATP from ADP in the presence of a proton gradient across the membrane. The alpha chain is a regulatory subunit. In Listeria welshimeri serovar 6b (strain ATCC 35897 / DSM 20650 / CCUG 15529 / CIP 8149 / NCTC 11857 / SLCC 5334 / V8), this protein is ATP synthase subunit alpha 1.